Reading from the N-terminus, the 625-residue chain is Complex I assembly factor ACAD9, mitochondrial (625 aa).

The N-terminal 41 residues, 1–41 (MSGYVLFSRGATAAAAAARASRVLRVFTERRRTLHTSLQSC), are a transit peptide targeting the mitochondrion. Position 45 is an N6-acetyllysine (Lys45). Lys96 carries the post-translational modification N6-succinyllysine. The Proton acceptor role is filled by Glu430. Thr482 carries the phosphothreonine modification. Lys525 is subject to N6-acetyllysine; alternate. Lys525 is modified (N6-succinyllysine; alternate).

This sequence belongs to the acyl-CoA dehydrogenase family. Homodimer. Interacts with NDUFAF1 and ECSIT. Part of the mitochondrial complex I assembly/MCIA complex that comprises at least the core subunits TMEM126B, NDUFAF1, ECSIT and ACAD9 and complement subunits such as COA1 and TMEM186. Interacts with TMEM70 and TMEM242. FAD serves as cofactor.

Its subcellular location is the mitochondrion inner membrane. The enzyme catalyses eicosanoyl-CoA + oxidized [electron-transfer flavoprotein] + H(+) = (2E)-eicosenoyl-CoA + reduced [electron-transfer flavoprotein]. The catalysed reaction is octadecanoyl-CoA + oxidized [electron-transfer flavoprotein] + H(+) = (2E)-octadecenoyl-CoA + reduced [electron-transfer flavoprotein]. It catalyses the reaction oxidized [electron-transfer flavoprotein] + hexadecanoyl-CoA + H(+) = (2E)-hexadecenoyl-CoA + reduced [electron-transfer flavoprotein]. It carries out the reaction decanoyl-CoA + oxidized [electron-transfer flavoprotein] + H(+) = (2E)-decenoyl-CoA + reduced [electron-transfer flavoprotein]. The enzyme catalyses nonanoyl-CoA + oxidized [electron-transfer flavoprotein] + H(+) = (2E)-nonenoyl-CoA + reduced [electron-transfer flavoprotein]. The catalysed reaction is pentadecanoyl-CoA + oxidized [electron-transfer flavoprotein] + H(+) = (2E)-pentadecenoyl-CoA + reduced [electron-transfer flavoprotein]. It catalyses the reaction undecanoyl-CoA + oxidized [electron-transfer flavoprotein] + H(+) = trans-2-undecenoyl-CoA + reduced [electron-transfer flavoprotein]. It carries out the reaction (9Z)-hexadecenoyl-CoA + oxidized [electron-transfer flavoprotein] + H(+) = (2E,9Z)-hexadecadienoyl-CoA + reduced [electron-transfer flavoprotein]. The enzyme catalyses heptadecanoyl-CoA + oxidized [electron-transfer flavoprotein] + H(+) = trans-2-heptadecenoyl-CoA + reduced [electron-transfer flavoprotein]. The catalysed reaction is (9E)-octadecenoyl-CoA + oxidized [electron-transfer flavoprotein] + H(+) = (2E,9E)-octadecadienoyl-CoA + reduced [electron-transfer flavoprotein]. It catalyses the reaction oxidized [electron-transfer flavoprotein] + (9Z)-octadecenoyl-CoA + H(+) = (2E,9Z)-octadecadienoyl-CoA + reduced [electron-transfer flavoprotein]. It carries out the reaction (9Z,12Z)-octadecadienoyl-CoA + oxidized [electron-transfer flavoprotein] + H(+) = (2E,9Z,12Z)-octadecatrienoyl-CoA + reduced [electron-transfer flavoprotein]. The enzyme catalyses (4Z,7Z,10Z,13Z,16Z,19Z)-docosahexaenoyl-CoA + oxidized [electron-transfer flavoprotein] + H(+) = (2E,4Z,7Z,10Z,13Z,16Z,19Z)-docosaheptaenoyl-CoA + reduced [electron-transfer flavoprotein]. The catalysed reaction is tetradecanoyl-CoA + oxidized [electron-transfer flavoprotein] + H(+) = (2E)-tetradecenoyl-CoA + reduced [electron-transfer flavoprotein]. Functionally, as part of the MCIA complex, primarily participates in the assembly of the mitochondrial complex I and therefore plays a role in oxidative phosphorylation. This moonlighting protein also has a dehydrogenase activity toward a broad range of substrates with greater specificity for long-chain unsaturated acyl-CoAs. However, in vivo, it does not seem to play a primary role in fatty acid oxidation. In addition, the function in complex I assembly is independent of the dehydrogenase activity of the protein. This chain is Complex I assembly factor ACAD9, mitochondrial, found in Rattus norvegicus (Rat).